The primary structure comprises 207 residues: Outer-membrane lipoprotein LolB (207 aa).

Positions 1 to 21 (MPLPDFRLIRLLPLAALVLTA) are cleaved as a signal peptide. Cysteine 22 carries N-palmitoyl cysteine lipidation. Cysteine 22 carries S-diacylglycerol cysteine lipidation.

It belongs to the LolB family. As to quaternary structure, monomer.

The protein localises to the cell outer membrane. In terms of biological role, plays a critical role in the incorporation of lipoproteins in the outer membrane after they are released by the LolA protein. The protein is Outer-membrane lipoprotein LolB of Escherichia coli O7:K1 (strain IAI39 / ExPEC).